A 311-amino-acid polypeptide reads, in one-letter code: Replication initiation protein (311 aa).

This sequence belongs to the plasmid replication initiation factor family.

Its function is as follows. This protein is probably a specific topoisomerase involved in initiating replication. This protein is specifically required and may be rate-limiting for replication of the plasmid in vivo. This Staphylococcus aureus protein is Replication initiation protein (repD).